We begin with the raw amino-acid sequence, 361 residues long: Chorismate synthase (361 aa).

NADP(+)-binding residues include R48 and R54. FMN is bound by residues 125–127, 238–239, G278, 293–297, and R319; these read RSS, NA, and KPTSS.

This sequence belongs to the chorismate synthase family. Homotetramer. FMNH2 serves as cofactor.

The enzyme catalyses 5-O-(1-carboxyvinyl)-3-phosphoshikimate = chorismate + phosphate. Its pathway is metabolic intermediate biosynthesis; chorismate biosynthesis; chorismate from D-erythrose 4-phosphate and phosphoenolpyruvate: step 7/7. Catalyzes the anti-1,4-elimination of the C-3 phosphate and the C-6 proR hydrogen from 5-enolpyruvylshikimate-3-phosphate (EPSP) to yield chorismate, which is the branch point compound that serves as the starting substrate for the three terminal pathways of aromatic amino acid biosynthesis. This reaction introduces a second double bond into the aromatic ring system. This Salmonella arizonae (strain ATCC BAA-731 / CDC346-86 / RSK2980) protein is Chorismate synthase.